We begin with the raw amino-acid sequence, 394 residues long: Phosphopentomutase (394 aa).

Positions 13, 286, 291, 327, 328, and 339 each coordinate Mn(2+).

Belongs to the phosphopentomutase family. It depends on Mn(2+) as a cofactor.

It is found in the cytoplasm. It carries out the reaction 2-deoxy-alpha-D-ribose 1-phosphate = 2-deoxy-D-ribose 5-phosphate. The catalysed reaction is alpha-D-ribose 1-phosphate = D-ribose 5-phosphate. It functions in the pathway carbohydrate degradation; 2-deoxy-D-ribose 1-phosphate degradation; D-glyceraldehyde 3-phosphate and acetaldehyde from 2-deoxy-alpha-D-ribose 1-phosphate: step 1/2. Its function is as follows. Isomerase that catalyzes the conversion of deoxy-ribose 1-phosphate (dRib-1-P) and ribose 1-phosphate (Rib-1-P) to deoxy-ribose 5-phosphate (dRib-5-P) and ribose 5-phosphate (Rib-5-P), respectively. The polypeptide is Phosphopentomutase (Bacillus anthracis (strain A0248)).